We begin with the raw amino-acid sequence, 382 residues long: PPE family protein PPE44 (382 aa).

Belongs to the mycobacterial PPE family.

The protein localises to the secreted. The protein resides in the cell wall. Its subcellular location is the cell surface. In terms of biological role, virulence factor that modulates host innate immune response. The polypeptide is PPE family protein PPE44 (Mycobacterium tuberculosis (strain CDC 1551 / Oshkosh)).